Here is a 396-residue protein sequence, read N- to C-terminus: Elongation factor Tu (396 aa).

One can recognise a tr-type G domain in the interval 10 to 206 (KPHCNIGTIG…AVDAYIPQPE (197 aa)). Residues 19–26 (GHVDHGKT) form a G1 region. 19-26 (GHVDHGKT) serves as a coordination point for GTP. Thr-26 contacts Mg(2+). The interval 60 to 64 (GITIS) is G2. Residues 81-84 (DCPG) are G3. GTP contacts are provided by residues 81–85 (DCPGH) and 136–139 (NKCD). Residues 136 to 139 (NKCD) form a G4 region. The tract at residues 174-176 (SAL) is G5.

Belongs to the TRAFAC class translation factor GTPase superfamily. Classic translation factor GTPase family. EF-Tu/EF-1A subfamily. As to quaternary structure, monomer.

The protein resides in the cytoplasm. It carries out the reaction GTP + H2O = GDP + phosphate + H(+). In terms of biological role, GTP hydrolase that promotes the GTP-dependent binding of aminoacyl-tRNA to the A-site of ribosomes during protein biosynthesis. This chain is Elongation factor Tu, found in Nitrobacter hamburgensis (strain DSM 10229 / NCIMB 13809 / X14).